We begin with the raw amino-acid sequence, 40 residues long: MLVLDKKTFEEEVLKTKGYVLVDYFGDGCVPCEALMPDVE.

A disulfide bridge connects residues Cys-29 and Cys-32.

This sequence belongs to the thioredoxin family.

Functionally, participates in various redox reactions through the reversible oxidation of its active center dithiol to a disulfide and catalyzes dithiol-disulfide exchange reactions. This Clostridium sporogenes protein is Thioredoxin (trxA).